We begin with the raw amino-acid sequence, 65 residues long: Large ribosomal subunit protein bL35 (65 aa).

This sequence belongs to the bacterial ribosomal protein bL35 family.

The polypeptide is Large ribosomal subunit protein bL35 (Prochlorococcus marinus (strain MIT 9313)).